The following is a 365-amino-acid chain: Medium chain reductase pydE (365 aa).

Residues 21 to 362 (KLIDSLPVPP…SKRARGKVLI (342 aa)) enclose the Enoyl reductase (ER) domain. NADP(+)-binding positions include 185-188 (SGSV), Tyr226, 274-275 (IG), and 354-355 (KR).

Belongs to the zinc-containing alcohol dehydrogenase family. As to quaternary structure, monomer.

Its pathway is mycotoxin biosynthesis. In terms of biological role, medium chain reductase; part of the gene cluster that mediates the biosynthesis of pyrrocidines, fungal natural products containing a macrocyclic para-cyclophane connected to a decahydrofluorene ring system that show potent antibiotic activities toward Gram-negative bacteria. Within the pathway, pydE functions synergistically with pydB, pydX and pydZ to form the cyclophane. The pathway begins with the PKS-NRPS pydA which, with the help of the trans-enoyl reductase pydC, synthesizes the polyketide-tyrosyl acyl thioester product which can be reductively off-loaded by the terminal reductase (R) domain in pydA. The alpha/beta hydrolase pydG is then required to catalyze the subsequent Knoevenagel condensation that affords the 3-pyrrolin-2-one ring, whereas the four proteins pydB, pydE, pydX and pydZ then function synergistically to form the cyclophane. PydB and the membrane-bound pydX and pydZ are lipid-binding proteins that can sequester and mold the pdyG product into the inverse S-shape. Binding of the medium chain reductase pydE to the complex would trigger the cascade oxidative cyclization. PydY is involved in the Diels-Alder cycloaddition that forms the decahydrofluorene core. Additional non-enzymatic hydroxylation yields pyrrocidine A2 which can be further reduced into pyrrocidine B by an endogenous reductase. In Acremonium sp, this protein is Medium chain reductase pydE.